The primary structure comprises 673 residues: ATP-dependent zinc metalloprotease FtsH (673 aa).

Topologically, residues Met1–Asn7 are cytoplasmic. Residues Leu8–Pro28 form a helical membrane-spanning segment. Over Gln29–Met100 the chain is Periplasmic. Residues Leu101–Phe121 form a helical membrane-spanning segment. Residues Met122–Arg673 lie on the Cytoplasmic side of the membrane. Gly194–Thr201 is an ATP binding site. His416 lines the Zn(2+) pocket. Glu417 is an active-site residue. Zn(2+)-binding residues include His420 and Asp492. The disordered stretch occupies residues Ala601–Arg673. Polar residues predominate over residues Ser648–Val660. Basic and acidic residues predominate over residues Val661–Arg673.

In the central section; belongs to the AAA ATPase family. The protein in the C-terminal section; belongs to the peptidase M41 family. In terms of assembly, homohexamer. Zn(2+) is required as a cofactor.

The protein localises to the cell inner membrane. Acts as a processive, ATP-dependent zinc metallopeptidase for both cytoplasmic and membrane proteins. Plays a role in the quality control of integral membrane proteins. This chain is ATP-dependent zinc metalloprotease FtsH, found in Magnetococcus marinus (strain ATCC BAA-1437 / JCM 17883 / MC-1).